The following is a 48-amino-acid chain: ATP synthase protein 8 (48 aa).

The chain crosses the membrane as a helical span at residues 13 to 32; sequence LVYGFALVTILLVLFAQYFL.

The protein belongs to the ATPase protein 8 family. F-type ATPases have 2 components, CF(1) - the catalytic core - and CF(0) - the membrane proton channel.

It is found in the mitochondrion membrane. Functionally, mitochondrial membrane ATP synthase (F(1)F(0) ATP synthase or Complex V) produces ATP from ADP in the presence of a proton gradient across the membrane which is generated by electron transport complexes of the respiratory chain. F-type ATPases consist of two structural domains, F(1) - containing the extramembraneous catalytic core and F(0) - containing the membrane proton channel, linked together by a central stalk and a peripheral stalk. During catalysis, ATP synthesis in the catalytic domain of F(1) is coupled via a rotary mechanism of the central stalk subunits to proton translocation. Part of the complex F(0) domain. Minor subunit located with subunit a in the membrane. The polypeptide is ATP synthase protein 8 (ATP8) (Kluyveromyces lactis (strain ATCC 8585 / CBS 2359 / DSM 70799 / NBRC 1267 / NRRL Y-1140 / WM37) (Yeast)).